Reading from the N-terminus, the 290-residue chain is Nitrogenase iron protein 2 (290 aa).

10 to 17 (GKGGIGKS) is an ATP binding site. Position 98 (C98) interacts with [4Fe-4S] cluster. Position 101 is an ADP-ribosylarginine; by dinitrogenase reductase ADP-ribosyltransferase (R101). C133 serves as a coordination point for [4Fe-4S] cluster.

This sequence belongs to the NifH/BchL/ChlL family. In terms of assembly, homodimer. [4Fe-4S] cluster is required as a cofactor. The reversible ADP-ribosylation of Arg-101 inactivates the nitrogenase reductase and regulates nitrogenase activity.

The catalysed reaction is N2 + 8 reduced [2Fe-2S]-[ferredoxin] + 16 ATP + 16 H2O = H2 + 8 oxidized [2Fe-2S]-[ferredoxin] + 2 NH4(+) + 16 ADP + 16 phosphate + 6 H(+). The key enzymatic reactions in nitrogen fixation are catalyzed by the nitrogenase complex, which has 2 components: the iron protein (component 2) and a component 1 which is either a molybdenum-iron protein, a vanadium-iron, or an iron-iron protein. The chain is Nitrogenase iron protein 2 (vnfH) from Azotobacter chroococcum mcd 1.